Here is a 432-residue protein sequence, read N- to C-terminus: Neuropeptide FF receptor 1 (432 aa).

At 1-43 (MEAEPSQPPNGSWPLGQNGSDVETSMATSLTFSSYYQHSSPVA) the chain is on the extracellular side. N-linked (GlcNAc...) asparagine glycans are attached at residues N10 and N18. The helical transmembrane segment at 44–64 (AMFIAAYVLIFLLCMVGNTLV) threads the bilayer. At 65–80 (CFIVLKNRHMRTVTNM) the chain is on the cytoplasmic side. Residues 81 to 101 (FILNLAVSDLLVGIFCMPTTL) traverse the membrane as a helical segment. Residues 102-117 (VDNLITGWPFDNATCK) are Extracellular-facing. N-linked (GlcNAc...) asparagine glycosylation is present at N113. Cysteines 116 and 203 form a disulfide. Residues 118-138 (MSGLVQGMSVSASVFTLVAIA) traverse the membrane as a helical segment. At 139–158 (VERFRCIVHPFREKLTLRKA) the chain is on the cytoplasmic side. Residues 159–179 (LFTIAVIWALALLIMCPSAVT) form a helical membrane-spanning segment. The Extracellular segment spans residues 180–214 (LTVTREEHHFMLDARNRSYPLYSCWEAWPEKGMRK). N195 carries an N-linked (GlcNAc...) asparagine glycan. The helical transmembrane segment at 215-235 (VYTAVLFAHIYLVPLALIVVM) threads the bilayer. Residues 236–273 (YVRIARKLCQAPGPARDTEEAVAEGGRTSRRRARVVHM) lie on the Cytoplasmic side of the membrane. The chain crosses the membrane as a helical span at residues 274 to 294 (LVMVALFFTLSWLPLWVLLLL). Residues 295-309 (IDYGELSELQLHLLS) are Extracellular-facing. The helical transmembrane segment at 310 to 330 (VYAFPLAHWLAFFHSSANPII) threads the bilayer. Residues 331-432 (YGYFNENFRR…MPLTIPAWNI (102 aa)) are Cytoplasmic-facing. The segment covering 380 to 406 (PSDSGLPSESGPSSGVPGPGRLPLRNG) has biased composition (low complexity). Residues 380–422 (PSDSGLPSESGPSSGVPGPGRLPLRNGRVAHQDGPGEGPGCNH) are disordered.

This sequence belongs to the G-protein coupled receptor 1 family. Expressed at high levels in the hypothalamus. Moderate levels found in the midbrain, thalamus, medulla oblongata, testis, eye, whole brain, cerebral cortex, striatum, hippocampus, cerebellum, optic nerve, placenta, spinal cord, pituitary gland and ovary.

It is found in the cell membrane. Its function is as follows. Receptor for NPAF (A-18-F-amide) and NPFF (F-8-F-amide) neuropeptides, also known as morphine-modulating peptides. Can also be activated by a variety of naturally occurring or synthetic FMRF-amide like ligands. This receptor mediates its action by association with G proteins that activate a phosphatidylinositol-calcium second messenger system. The chain is Neuropeptide FF receptor 1 (Npffr1) from Rattus norvegicus (Rat).